We begin with the raw amino-acid sequence, 906 residues long: MAWPCITRACCIARFWNQLDKADIAVPLVFTKYSEATEHPGAPPQPPAPLQPALAPPSRAVAIETQPAQGESDAVARATGPAPGPSVDRETVAAPGRSGLGLGAASASTSGSGPADSVMRQDYRAWKVQRPEPSCRPRSEYQPSDAPFERETQYQKDFRAWPLPRRGDHPWIPKPVQIPATSQPSQPVLGVPKRRPQSQERGPMQLSADARDPEGAGGAGVLAAGKASGVDQRDTRRKAGPAWMVTRNEGHEEKPLPPAQSQTQEGGPAAGKASGADQRDTRRKAGPAWMVTRSEGHEEKPLPPAQSQTQEGGPAAGKASGADQRDTRRKAGPAWMVTRTEGHEETPLPPAQSQTQEGGPAAGKASGADERDTRRKAGPAWMVRRSEGHEQTPAAHAQGTGPEGGKGRAVADALNRQIREEVASTVSSSYRNEFRAWTDIKPVKPIKAKPQYKPPDDKMVHETSYSAQFKGEANKPSAADNKAMDRRRIRSLYSEPFKECPKVEKPSVQSSKPKKTSTSHKPPRKAKDKQVVSGQAAKKKTTEGPSATKPDDKEQSKEMNNKLAEAKESRVKPTSDASKNRGPVTKEPHKDQGSVAPGLPKGQEPLKDQGPVVPGLPKDQVPVVPGSLKGQSPTAPGPTKDQGAVLLGPVKDLGPVAPAPIKVQDHIASELLKNKDSVPLAPAKAQSPLLPEPLKNQSPVVPASTKDQSFPTPAPRKDPGPVIPEPEKDRAPTVPERRKDQHVSIMASLKNEAPMVPESVKNQGLAGPELVKDTGTDTTAPRYLKGHDSVFVAPVKNQGPVIPEPVKSQDPIIPALAKDQGPMLPEPPKNQSPVVLGPIKNQDPIIPVPLKGQDPLVPAPTKDQGPTAPDPLKTQGPKGTQLPTVSPSPPVMIPTVPHTEYIEGSP.

The calmodulin-binding stretch occupies residues 1–15 (MAWPCITRACCIARF). Residues Cys-5, Cys-10, and Cys-11 are each lipidated (S-palmitoyl cysteine). 5 disordered regions span residues 37–56 (TEHP…ALAP), 65–411 (TQPA…RAVA), 441–651 (KPVK…GPVK), 674–782 (NKDS…TAPR), and 817–906 (AKDQ…EGSP). A compositionally biased stretch (pro residues) spans 41 to 50 (GAPPQPPAPL). Residues 93-117 (AAPGRSGLGLGAASASTSGSGPADS) show a composition bias toward low complexity. Phosphoserine is present on Ser-98. Residues 116–139 (DSVMRQDYRAWKVQRPEPSCRPRS) are mn 1. Over residues 119 to 139 (MRQDYRAWKVQRPEPSCRPRS) the composition is skewed to basic and acidic residues. The tract at residues 124–138 (RAWKVQRPEPSCRPR) is calmodulin-binding. Tyr-141 is modified (phosphotyrosine). Over residues 147 to 171 (PFERETQYQKDFRAWPLPRRGDHPW) the composition is skewed to basic and acidic residues. The tract at residues 151–174 (ETQYQKDFRAWPLPRRGDHPWIPK) is mn 2. The interval 160-174 (AWPLPRRGDHPWIPK) is calmodulin-binding. Ser-185 carries the phosphoserine modification. The calmodulin-binding stretch occupies residues 187–201 (PVLGVPKRRPQSQER). At Ser-207 the chain carries Phosphoserine. The Mc-1 repeat unit spans residues 222–267 (LAAGKASGVDQRDTRRKAGPAWMVTRNEGHEEKPLPPAQSQTQEGG). The segment at 222–405 (LAAGKASGVD…HAQGTGPEGG (184 aa)) is 4 X approximate tandem repeat Mc. Calmodulin-binding stretches follow at residues 235–249 (TRRK…TRNE), 280–294 (DTRR…VTRS), 325–339 (RDTR…MVTR), 375–389 (RKAG…SEGH), 435–449 (RAWT…IKAK), 486–500 (RRRI…FKEC), and 513–527 (PKKT…RKAK). The stretch at 268–313 (PAAGKASGADQRDTRRKAGPAWMVTRSEGHEEKPLPPAQSQTQEGG) is one Mc-2 repeat. The stretch at 314 to 359 (PAAGKASGADQRDTRRKAGPAWMVTRTEGHEETPLPPAQSQTQEGG) is one Mc-3 repeat. One copy of the Mc-4 repeat lies at 360-405 (PAAGKASGADERDTRRKAGPAWMVRRSEGHEQTPAAHAQGTGPEGG). A mn 3 region spans residues 427–450 (SSSYRNEFRAWTDIKPVKPIKAKP). The span at 496–505 (PFKECPKVEK) shows a compositional bias: basic and acidic residues. The segment covering 512–527 (KPKKTSTSHKPPRKAK) has biased composition (basic residues). Residues 549-573 (KPDDKEQSKEMNNKLAEAKESRVKP) are compositionally biased toward basic and acidic residues. Phosphoserine occurs at positions 632 and 687. The segment covering 695–711 (KNQSPVVPASTKDQSFP) has biased composition (polar residues). Residues 715–742 (PRKDPGPVIPEPEKDRAPTVPERRKDQH) show a composition bias toward basic and acidic residues. Ser-905 is modified (phosphoserine).

This sequence belongs to the STOP family. In terms of assembly, interacts with calmodulin (via C-terminus); the interaction is dependent on Ca(2+). Interacts (via C-terminus) with TMEM106B (via N-terminus). Interacts with ZDHHC13 (via ANK repeats). Interacts with ZDHHC17 (via ANK repeats). In terms of processing, palmitoylated. Probably depalmitoylated by ABHD17A, ABHD17B and ABHD17C. During neuronal polarization, palmitoylation and depalmitoylation cycles regulate MAP6 shuttling between secretory vesicles and microtubules, and its polarized distribution in the axon. As to expression, isoform 1 is specifically expressed in adult brain. Isoform 2 is predominantly expressed in embryonic brain; expression persists at low levels in the adult brain. Isoform 3 is expressed at high levels in lung and at lower levels in testis, heart, muscle and kidney (at protein level). Oligodendrocytes express a major isoform of 89 kDa (O-STOP). Astrocytes also express an isoform of 60 kDa (A-STOP).

The protein resides in the cytoplasm. It localises to the cytoskeleton. Its subcellular location is the golgi apparatus. It is found in the cell projection. The protein localises to the axon. The protein resides in the dendrite. It localises to the cytoplasmic vesicle. Its subcellular location is the secretory vesicle membrane. Functionally, involved in microtubule stabilization in many cell types, including neuronal cells. Specifically has microtubule cold stabilizing activity. Involved in dendrite morphogenesis and maintenance by regulating lysosomal trafficking via its interaction with TMEM106B. Regulates KIF5A-mediated axonal cargo transport. Regulates axonal growth during neuron polarization. In Mus musculus (Mouse), this protein is Microtubule-associated protein 6 (Map6).